The chain runs to 196 residues: UMP-CMP kinase (196 aa).

13–18 contacts ATP; it reads GAGKGT. Serine 33 is modified (phosphoserine). The interval 33 to 63 is NMP; it reads SAGELLRDERKNPDSQYGELIEKYIKEGKIV. Arginine 39 serves as a coordination point for a ribonucleoside 5'-phosphate. N6-acetyllysine is present on residues lysine 43 and lysine 55. Position 61–63 (61–63) interacts with a ribonucleoside 5'-phosphate; sequence KIV. Lysine 73 is covalently cross-linked (Glycyl lysine isopeptide (Lys-Gly) (interchain with G-Cter in SUMO2)). A ribonucleoside 5'-phosphate is bound at residue 93–96; that stretch reads GFPR. Asparagine 100 is a CMP binding site. Lysine 106 is subject to N6-succinyllysine. Residues 133–143 are LID; sequence ERGKSSGRSDD. Arginine 134 contributes to the ATP binding site. Residues arginine 140 and arginine 151 each coordinate a ribonucleoside 5'-phosphate. Lysine 179 contributes to the ATP binding site. Phosphoserine is present on serine 180.

This sequence belongs to the adenylate kinase family. UMP-CMP kinase subfamily. As to quaternary structure, monomer. Mg(2+) is required as a cofactor.

It is found in the nucleus. The protein resides in the cytoplasm. The catalysed reaction is CMP + ATP = CDP + ADP. It catalyses the reaction dCMP + ATP = dCDP + ADP. It carries out the reaction UMP + ATP = UDP + ADP. The enzyme catalyses a 2'-deoxyribonucleoside 5'-diphosphate + ATP = a 2'-deoxyribonucleoside 5'-triphosphate + ADP. The catalysed reaction is a ribonucleoside 5'-diphosphate + ATP = a ribonucleoside 5'-triphosphate + ADP. In terms of biological role, catalyzes the phosphorylation of pyrimidine nucleoside monophosphates at the expense of ATP. Plays an important role in de novo pyrimidine nucleotide biosynthesis. Has preference for UMP and CMP as phosphate acceptors. Also displays broad nucleoside diphosphate kinase activity. The chain is UMP-CMP kinase (Cmpk1) from Mus musculus (Mouse).